The following is a 636-amino-acid chain: Biosynthetic arginine decarboxylase (636 aa).

The residue at position 101 (K101) is an N6-(pyridoxal phosphate)lysine. Position 286 to 296 (286 to 296 (FDVGGGLAVDY)) interacts with substrate.

The protein belongs to the Orn/Lys/Arg decarboxylase class-II family. SpeA subfamily. Mg(2+) is required as a cofactor. Requires pyridoxal 5'-phosphate as cofactor.

The enzyme catalyses L-arginine + H(+) = agmatine + CO2. It functions in the pathway amine and polyamine biosynthesis; agmatine biosynthesis; agmatine from L-arginine: step 1/1. Catalyzes the biosynthesis of agmatine from arginine. This is Biosynthetic arginine decarboxylase from Shewanella denitrificans (strain OS217 / ATCC BAA-1090 / DSM 15013).